We begin with the raw amino-acid sequence, 152 residues long: Deoxyuridine 5'-triphosphate nucleotidohydrolase (152 aa).

Substrate-binding positions include 71-73, asparagine 84, 88-90, and methionine 98; these read RSG and LID.

The protein belongs to the dUTPase family. The cofactor is Mg(2+).

It carries out the reaction dUTP + H2O = dUMP + diphosphate + H(+). It functions in the pathway pyrimidine metabolism; dUMP biosynthesis; dUMP from dCTP (dUTP route): step 2/2. In terms of biological role, this enzyme is involved in nucleotide metabolism: it produces dUMP, the immediate precursor of thymidine nucleotides and it decreases the intracellular concentration of dUTP so that uracil cannot be incorporated into DNA. This chain is Deoxyuridine 5'-triphosphate nucleotidohydrolase, found in Shewanella sp. (strain ANA-3).